The sequence spans 285 residues: uncharacterized protein (285 aa).

This is an uncharacterized protein from Borreliella burgdorferi (strain ATCC 35210 / DSM 4680 / CIP 102532 / B31) (Borrelia burgdorferi).